We begin with the raw amino-acid sequence, 156 residues long: Small ribosomal subunit protein uS7 (156 aa).

Belongs to the universal ribosomal protein uS7 family. Part of the 30S ribosomal subunit. Contacts proteins S9 and S11.

In terms of biological role, one of the primary rRNA binding proteins, it binds directly to 16S rRNA where it nucleates assembly of the head domain of the 30S subunit. Is located at the subunit interface close to the decoding center, probably blocks exit of the E-site tRNA. The protein is Small ribosomal subunit protein uS7 of Cutibacterium acnes (strain DSM 16379 / KPA171202) (Propionibacterium acnes).